A 152-amino-acid polypeptide reads, in one-letter code: MKTSMKLDIVSVEAALYAGDAHFVVVPGESGELGIYPHHAPLLTRIRPGVVTLVDAPTGEHRRLLVAGGVLEVSRDGVTLIADHALRTPELDELRTREARHAADDWRQRYAHENRRAFDFASARAELMEEIRRFFAMALRQQAPHDKPGSAG.

This sequence belongs to the ATPase epsilon chain family. As to quaternary structure, F-type ATPases have 2 components, CF(1) - the catalytic core - and CF(0) - the membrane proton channel. CF(1) has five subunits: alpha(3), beta(3), gamma(1), delta(1), epsilon(1). CF(0) has three main subunits: a, b and c.

The protein resides in the cell inner membrane. Produces ATP from ADP in the presence of a proton gradient across the membrane. This is ATP synthase epsilon chain 2 from Burkholderia orbicola (strain AU 1054).